A 266-amino-acid polypeptide reads, in one-letter code: Non-structural maintenance of chromosomes element 1 homolog (266 aa).

An interaction with NSMCE3 region spans residues 1-102 (MQGSTRRMSV…SISKMATDFA (102 aa)). The RING-type; atypical zinc finger occupies 191-232 (CNICHSLLIQGQSCETCGIRMHLPCVAKYFQSNAEPRCPHCN). Positions 245-266 (PEKERESGVSKSNKKSLRSRQH) are disordered. Ser-251 is subject to Phosphoserine. Positions 256–266 (SNKKSLRSRQH) are enriched in basic residues.

This sequence belongs to the NSE1 family. In terms of assembly, component of the SMC5-SMC6 complex which consists at least of SMC5, SMC6, NSMCE2, NSMCE1, NSMCE4A or EID3 and NSMCE3. NSMCE1, NSMCE4A or EID3 and NSMCE3 probably form a subcomplex that bridges the head domains of the SMC5-SMC6 heterodimer. Interacts with NSMCE3. Ubiquitinated.

Its subcellular location is the nucleus. The protein resides in the chromosome. It localises to the telomere. The catalysed reaction is S-ubiquitinyl-[E2 ubiquitin-conjugating enzyme]-L-cysteine + [acceptor protein]-L-lysine = [E2 ubiquitin-conjugating enzyme]-L-cysteine + N(6)-ubiquitinyl-[acceptor protein]-L-lysine.. Its function is as follows. RING-type zinc finger-containing E3 ubiquitin ligase that assembles with melanoma antigen protein (MAGE) to catalyze the direct transfer of ubiquitin from E2 ubiquitin-conjugating enzyme to a specific substrate. Within MAGE-RING ubiquitin ligase complex, MAGE stimulates and specifies ubiquitin ligase activity likely through recruitment and/or stabilization of the E2 ubiquitin-conjugating enzyme at the E3:substrate complex. Involved in maintenance of genome integrity, DNA damage response and DNA repair. NSMCE3/MAGEG1 and NSMCE1 ubiquitin ligase are components of SMC5-SMC6 complex and may positively regulate homologous recombination-mediated DNA repair. The protein is Non-structural maintenance of chromosomes element 1 homolog (NSMCE1) of Pongo abelii (Sumatran orangutan).